The chain runs to 308 residues: Growth/differentiation factor 15 (308 aa).

The signal sequence occupies residues 1–29 (MPGQELKTLNGSQMLLVLLVLLWPPHGGA). The propeptide occupies 30–192 (VSLAEASRAS…HLRPRASRGR (163 aa)). N-linked (GlcNAc...) asparagine glycosylation is present at N70. The tract at residues 152–179 (APALHLRLSPPPSQSDQLLVKSSSSRPQ) is disordered. A compositionally biased stretch (polar residues) spans 165–178 (QSDQLLVKSSSSRP). 4 disulfides stabilise this stretch: C203-C210, C211-C274, C240-C305, and C244-C307.

The protein belongs to the TGF-beta family. Homodimer; disulfide-linked. Interacts with GFRAL and RET; ligand of GFRAL, which mediates GDF15 internalization and cellular signaling through interaction with RET via the formation of a 2:2:2 ternary complex composed of GDF15, GFRAL and RET. Detected in plasma (at protein level).

Its subcellular location is the secreted. Functionally, hormone produced in response to various stresses to confer information about those stresses to the brain, and trigger an aversive response, characterized by nausea and/or loss of appetite. The aversive response is both required to reduce continuing exposure to those stresses at the time of exposure and to promote avoidance behavior in the future. Acts by binding to its receptor, GFRAL, activating GFRAL-expressing neurons localized in the area postrema and nucleus tractus solitarius of the brainstem. It then triggers the activation of neurons localized within the parabrachial nucleus and central amygdala, which constitutes part of the 'emergency circuit' that shapes responses to stressful conditions. The GDF15-GFRAL signal induces expression of genes involved in metabolism, such as lipid metabolism in adipose tissues. Required for avoidance behavior in response to food allergens: induced downstream of mast cell activation to promote aversion and minimize harmful effects of exposure to noxious substances. In addition to suppress appetite, also promotes weight loss by enhancing energy expenditure in muscle: acts by increasing calcium futile cycling in muscle. Contributes to the effect of metformin, an anti-diabetic drug, on appetite reduction and weight loss: produced in the kidney in response to metformin treatment, thereby activating the GDF15-GFRAL response, leading to reduced appetite and weight. Produced in response to anticancer drugs, such as camptothecin or cisplatin, promoting nausea and contributing to malnutrition. Overproduced in many cancers, promoting anorexia in cancer (cachexia). Responsible for the risk of nausea during pregnancy: high levels of GDF15 during pregnancy, mostly originating from embryos, are associated with increased nausea. Maternal sensitivity to nausea is probably determined by pre-pregnancy exposure to GDF15, females with naturally high level of GDF15 being less susceptible to nausea than females with low levels of GDF15 before pregnancy. Promotes metabolic adaptation in response to systemic inflammation caused by bacterial and viral infections in order to promote tissue tolerance and prevent tissue damage. Inhibits growth hormone signaling on hepatocytes. In Macaca fascicularis (Crab-eating macaque), this protein is Growth/differentiation factor 15.